Here is an 832-residue protein sequence, read N- to C-terminus: Valine--tRNA ligase (832 aa).

Residues 41 to 51 (PNVTGKLHLGH) carry the 'HIGH' region motif. A 'KMSKS' region motif is present at residues 512-516 (KMSKS). Lys515 serves as a coordination point for ATP. A coiled-coil region spans residues 760 to 831 (FIEISQEQKQ…QIYLEELKWK (72 aa)).

It belongs to the class-I aminoacyl-tRNA synthetase family. ValS type 1 subfamily. In terms of assembly, monomer.

It localises to the cytoplasm. The enzyme catalyses tRNA(Val) + L-valine + ATP = L-valyl-tRNA(Val) + AMP + diphosphate. Its function is as follows. Catalyzes the attachment of valine to tRNA(Val). As ValRS can inadvertently accommodate and process structurally similar amino acids such as threonine, to avoid such errors, it has a 'posttransfer' editing activity that hydrolyzes mischarged Thr-tRNA(Val) in a tRNA-dependent manner. The protein is Valine--tRNA ligase of Mycoplasmopsis synoviae (strain 53) (Mycoplasma synoviae).